The following is a 632-amino-acid chain: 1-deoxy-D-xylulose-5-phosphate synthase (632 aa).

Thiamine diphosphate is bound by residues H75 and 117 to 119 (GHA). D146 contacts Mg(2+). Thiamine diphosphate is bound by residues 147 to 148 (AA), N175, and E370. N175 is a Mg(2+) binding site.

Belongs to the transketolase family. DXPS subfamily. In terms of assembly, homodimer. Mg(2+) is required as a cofactor. Requires thiamine diphosphate as cofactor.

It catalyses the reaction D-glyceraldehyde 3-phosphate + pyruvate + H(+) = 1-deoxy-D-xylulose 5-phosphate + CO2. It functions in the pathway metabolic intermediate biosynthesis; 1-deoxy-D-xylulose 5-phosphate biosynthesis; 1-deoxy-D-xylulose 5-phosphate from D-glyceraldehyde 3-phosphate and pyruvate: step 1/1. Its function is as follows. Catalyzes the acyloin condensation reaction between C atoms 2 and 3 of pyruvate and glyceraldehyde 3-phosphate to yield 1-deoxy-D-xylulose-5-phosphate (DXP). The sequence is that of 1-deoxy-D-xylulose-5-phosphate synthase from Chlamydia muridarum (strain MoPn / Nigg).